A 416-amino-acid chain; its full sequence is MLEQMGIAAKAASYKLALLSSGEKNRVLEKIADELEAQMESILSANVQDVEQARDNGLSEAMLDRLTLTPARLKAIADDVRQVCNLADPVGQVIDGGLLDSGLRLERRRVPLGVVGVIYEARPNVTVDVASLCLKTGNAVILRGGKETHRTNAATVRVIQKALKACGLPEAAVQAIDNPDRSLVNEMLRMDKYIDMLIPRGGAGLHKLCREQSTIPVITGGIGVCHIFVDSSADIAPALKIIVNAKTQRPSTCNTVETLLVHQDIAERFLPALSKQMAESGVTLHGDETVMQVLHGPAKLVPLKPEELDNEFLSLDLNVVVVENMDGAIGHIREHGTQHSDAILTCDMHNAARFVNEVDSAAVYVNASTRFTDGGQFGLGAEVAVSTQKLHARGPMGLEALTTYKWIGFGDGTIRA.

This sequence belongs to the gamma-glutamyl phosphate reductase family.

The protein resides in the cytoplasm. It catalyses the reaction L-glutamate 5-semialdehyde + phosphate + NADP(+) = L-glutamyl 5-phosphate + NADPH + H(+). Its pathway is amino-acid biosynthesis; L-proline biosynthesis; L-glutamate 5-semialdehyde from L-glutamate: step 2/2. Functionally, catalyzes the NADPH-dependent reduction of L-glutamate 5-phosphate into L-glutamate 5-semialdehyde and phosphate. The product spontaneously undergoes cyclization to form 1-pyrroline-5-carboxylate. This is Gamma-glutamyl phosphate reductase from Salmonella agona (strain SL483).